The primary structure comprises 196 residues: MNIIRKLKPGTISLVLGPMFAGKTTFLIHCIYMLERLEKKVVFIKSTKNTRDKTIKTHSGIQLRPKQCKIIESTQLSDVGSLTDIHAVVVDEAHFFDDLIKCRTWAEEEKIIILAGLNASFEQKMFPPIVRIFPYCSWVKYIGRTCMKCNQHNACFNVRKNADKTLILAGGSELYVTCCNNCLKNTFIKQLQPIKY.

ATP is bound at residue 17 to 24; sequence GPMFAGKT. Glu-92 acts as the Proton acceptor in catalysis. Phe-121 lines the substrate pocket. Residues Cys-146 and Cys-149 each coordinate Zn(2+). 166–170 provides a ligand contact to substrate; it reads LILAG. Zn(2+) is bound by residues Cys-179 and Cys-182.

It belongs to the thymidine kinase family.

It catalyses the reaction thymidine + ATP = dTMP + ADP + H(+). In terms of biological role, phosphorylates thymidine. ASFV replicates in the cytoplasm of infected cells and contains genes encoding a number of enzymes needed for DNA synthesis, including thymidine kinase. Important for growth in swine macrophages in vitro and is a virus virulence factor in swine. This chain is Thymidine kinase, found in African swine fever virus (strain Badajoz 1971 Vero-adapted) (Ba71V).